We begin with the raw amino-acid sequence, 855 residues long: Mitofusin FZO1 (855 aa).

A compositionally biased stretch (basic and acidic residues) spans methionine 1 to threonine 19. The interval methionine 1–threonine 27 is disordered. The Cytoplasmic segment spans residues methionine 1–proline 705. The segment at asparagine 91 to valine 190 is HRN. A Dynamin-type G domain is found at aspartate 184–proline 467. GTP is bound by residues asparagine 197–alanine 202 and lysine 370–aspartate 373. Lysine 398 is covalently cross-linked (Glycyl lysine isopeptide (Lys-Gly) (interchain with G-Cter in ubiquitin)). Position 408 (serine 408) interacts with GTP. Over residues glutamate 413 to aspartate 433 the composition is skewed to basic and acidic residues. Residues glutamate 413–serine 447 form a disordered region. A Glycyl lysine isopeptide (Lys-Gly) (interchain with G-Cter in ubiquitin) cross-link involves residue lysine 464. The interval lysine 484–valine 547 is HR1. The required for interaction with UGO1 stretch occupies residues glycine 630–glutamine 843. The helical transmembrane segment at threonine 706–isoleucine 726 threads the bilayer. The Mitochondrial intermembrane segment spans residues lysine 727–lysine 736. The chain crosses the membrane as a helical span at residues leucine 737–leucine 757. The Cytoplasmic segment spans residues proline 758–aspartate 855. The tract at residues tyrosine 769–lysine 831 is HR2. Residues threonine 798–serine 825 are a coiled coil.

This sequence belongs to the TRAFAC class dynamin-like GTPase superfamily. Dynamin/Fzo/YdjA family. Mitofusin subfamily. As to quaternary structure, homodimer. Dimerization depends on GTP binding. Component of a large multiprotein complex of 800 kDa. Binds the cytoplasmic domain of UGO1 which binds MGM1 through its intermembrane space domain. Interacts with MDM30. Interacts with UBP2 and UBP12. Interacts (when ubiquitinated) with DOA1; the interaction recruits FZO1 to CDC48 and promotes FZO1 proteasomal degradation. In terms of processing, ubiquitinated at Lys-398 and Lys-464. MDM30 and UGO1 are involved in ubiquitination. Deubiquitinated by UBP2 and UBP12. UBP2 and UBP12 recognize distinct ubiquitin chains on FZO1 that have opposing effects on mitochondrial fusion. UBP2 removes ubiquitin chains that initiate proteolysis of FZO1 and inhibit fusion. UBP12 recognizes ubiquitin chains that stabilize FZO1 and promote mitochondrial fusion. UBP12 deubiquitylates FZO1 only after oligomerization.

It localises to the mitochondrion outer membrane. It catalyses the reaction GTP + H2O = GDP + phosphate + H(+). Essential transmembrane GTPase, which mediates mitochondrial fusion. Fusion proceeds through several steps; first mitochondria are tethered together, then brought into close contact, followed by the formation of a docking ring around contact areas, and finally membrane fusion. Fusion of mitochondria occurs in many cell types and constitutes an important step in mitochondrial morphology, which is balanced between fusion and fission, mediated by FZO1 and DNM1, respectively. Functions antagonistically with DNM1. Probably acts by forming membrane contact sites that mediate mitochondrial membrane fusion. Mitochondrial docking and fusion requires GTP hydrolysis. Mitochondrial fusion also promotes increased lifespan. The sequence is that of Mitofusin FZO1 (FZO1) from Saccharomyces cerevisiae (strain ATCC 204508 / S288c) (Baker's yeast).